The chain runs to 199 residues: Urease accessory protein UreG (199 aa).

8–15 serves as a coordination point for GTP; the sequence is GPVGSGKT.

The protein belongs to the SIMIBI class G3E GTPase family. UreG subfamily. As to quaternary structure, homodimer. UreH, UreF and UreG form a complex that acts as a GTP-hydrolysis-dependent molecular chaperone, activating the urease apoprotein by helping to assemble the nickel containing metallocenter of UreC. The UreE protein probably delivers the nickel.

It is found in the cytoplasm. Facilitates the functional incorporation of the urease nickel metallocenter. This process requires GTP hydrolysis, probably effectuated by UreG. This chain is Urease accessory protein UreG, found in Helicobacter pylori (strain P12).